A 61-amino-acid chain; its full sequence is Small ribosomal subunit protein uS14B (61 aa).

4 residues coordinate Zn(2+): Cys24, Cys27, Cys40, and Cys43.

It belongs to the universal ribosomal protein uS14 family. Zinc-binding uS14 subfamily. Part of the 30S ribosomal subunit. Contacts proteins S3 and S10. The cofactor is Zn(2+).

Binds 16S rRNA, required for the assembly of 30S particles and may also be responsible for determining the conformation of the 16S rRNA at the A site. The protein is Small ribosomal subunit protein uS14B of Bacillus velezensis (strain DSM 23117 / BGSC 10A6 / LMG 26770 / FZB42) (Bacillus amyloliquefaciens subsp. plantarum).